The primary structure comprises 536 residues: DEAD-box ATP-dependent RNA helicase 41 (536 aa).

Residues 1-10 are compositionally biased toward basic and acidic residues; the sequence is MEQEENHSAD. The tract at residues 1-25 is disordered; that stretch reads MEQEENHSADHLSAQPGNGNELEES. Residues 40–69 form an HIT-type zinc finger; it reads GEPRCVICGRYGEYICDQTDDDICSVECKT. The Q motif signature appears at 137–165; that stretch reads MCFSSSGLPEKLVLNLEAAGYVMPTPVQM. Positions 168–344 constitute a Helicase ATP-binding domain; the sequence is IPSSICNRSL…NSLAKNAIHI (177 aa). 181-188 serves as a coordination point for ATP; the sequence is ADTGSGKT. The short motif at 293-296 is the DEAD box element; the sequence is DEVD. Positions 355 to 518 constitute a Helicase C-terminal domain; sequence SVKQVVIWVE…PIPRELANSK (164 aa).

The protein belongs to the DEAD box helicase family. DDX59 subfamily.

It catalyses the reaction ATP + H2O = ADP + phosphate + H(+). The polypeptide is DEAD-box ATP-dependent RNA helicase 41 (Oryza sativa subsp. japonica (Rice)).